An 87-amino-acid chain; its full sequence is uncharacterized protein (87 aa).

2 helical membrane-spanning segments follow: residues 8 to 28 (IVVLIGTQLAASAVILFIFDL) and 47 to 67 (LAGSFAFYLFSAGLFFLLIGL).

It localises to the cell membrane. This is an uncharacterized protein from Bacillus subtilis (strain 168).